The sequence spans 296 residues: Formamidopyrimidine-DNA glycosylase (296 aa).

The Schiff-base intermediate with DNA role is filled by proline 2. The active-site Proton donor is glutamate 3. Lysine 61 (proton donor; for beta-elimination activity) is an active-site residue. Residues histidine 104, arginine 123, and lysine 169 each contribute to the DNA site. The FPG-type zinc-finger motif lies at 255–289 (DAYGREGEPCRRCGAIMRRDKFMNRSSFYCPRCQP). The Proton donor; for delta-elimination activity role is filled by arginine 279.

The protein belongs to the FPG family. In terms of assembly, monomer. Zn(2+) is required as a cofactor.

It carries out the reaction Hydrolysis of DNA containing ring-opened 7-methylguanine residues, releasing 2,6-diamino-4-hydroxy-5-(N-methyl)formamidopyrimidine.. It catalyses the reaction 2'-deoxyribonucleotide-(2'-deoxyribose 5'-phosphate)-2'-deoxyribonucleotide-DNA = a 3'-end 2'-deoxyribonucleotide-(2,3-dehydro-2,3-deoxyribose 5'-phosphate)-DNA + a 5'-end 5'-phospho-2'-deoxyribonucleoside-DNA + H(+). Functionally, involved in base excision repair of DNA damaged by oxidation or by mutagenic agents. Acts as a DNA glycosylase that recognizes and removes damaged bases. Has a preference for oxidized purines, such as 7,8-dihydro-8-oxoguanine (8-oxoG). Has AP (apurinic/apyrimidinic) lyase activity and introduces nicks in the DNA strand. Cleaves the DNA backbone by beta-delta elimination to generate a single-strand break at the site of the removed base with both 3'- and 5'-phosphates. This chain is Formamidopyrimidine-DNA glycosylase, found in Mycobacterium sp. (strain KMS).